The chain runs to 712 residues: Ribosome-releasing factor 2, mitochondrial (712 aa).

The N-terminal 28 residues, 1 to 28 (MQYSLLSAQLRCSRFLLRQQAPFINRCY), are a transit peptide targeting the mitochondrion. Residues 30–309 (DDIRNIGILA…AVNAYLPTPN (280 aa)) enclose the tr-type G domain. GTP is bound by residues 39–46 (AHIDAGKT), 103–107 (DTPGH), and 157–160 (NKMD).

The protein belongs to the TRAFAC class translation factor GTPase superfamily. Classic translation factor GTPase family. EF-G/EF-2 subfamily.

It localises to the mitochondrion. Functionally, mitochondrial GTPase that mediates the disassembly of ribosomes from messenger RNA at the termination of mitochondrial protein biosynthesis. Not involved in the GTP-dependent ribosomal translocation step during translation elongation. The sequence is that of Ribosome-releasing factor 2, mitochondrial from Drosophila virilis (Fruit fly).